The chain runs to 284 residues: L-fucose dehydrogenase (284 aa).

Residues R19, I21, D40, K41, D62, V63, N89, Y154, K158, I187, T189, and L191 each contribute to the NAD(+) site.

It belongs to the short-chain dehydrogenases/reductases (SDR) family.

It catalyses the reaction L-fucose + NAD(+) = L-fucono-1,5-lactone + NADH + H(+). The catalysed reaction is D-arabinose + NAD(+) = D-arabinono-1,5-lactone + NADH + H(+). It carries out the reaction L-galactose + NAD(+) = L-galactono-1,5-lactone + NADH + H(+). The protein operates within carbohydrate degradation; L-fucose degradation. Its function is as follows. Catalyzes the NAD(+)-dependent oxidation of L-fucose, yielding L-fucono-1,5-lactone, which rapidly converts spontaneously to L-fucone-1,4-lactone. Can also act on D-arabinose and L-galactose, with lower catalytic efficiency. Does not use NADPH. May be the initial enzyme of the putative L-fucose degradation pathway in mammals. This chain is L-fucose dehydrogenase (HSD17B14), found in Oryctolagus cuniculus (Rabbit).